The sequence spans 83 residues: Protein L83L (83 aa).

Residues 1-10 (MDTSLKNNDG) show a composition bias toward polar residues. Residues 1 to 25 (MDTSLKNNDGASEADNKNYQDYKDE) form a disordered region. Positions 14–25 (ADNKNYQDYKDE) are enriched in basic and acidic residues.

This sequence belongs to the asfivirus L83L family. Interacts with host IL1B.

It is found in the host cytoplasm. Functionally, may subvert the host innate immune response by interacting with host IL1B and interfering with its function. The polypeptide is Protein L83L (Ornithodoros (relapsing fever ticks)).